Here is a 206-residue protein sequence, read N- to C-terminus: MEESILRMHDKTTLKNMAFNRGLSRRGHNGRNASRMRKQDFIDFIMVQNHRDQSAVLGSDFLGDDMIRIFQEFIMDETFTFNPFIHLMGTIKNSTSKSPVSNQPSPEEDEPIPDLTLKPLEPCTKCECTTCMKNSIKQEENLKVHQNILNLESKIMCVVCQANVRNVVFVPCNHLATCISCSANPLMPKKCPMCRKGCKTTIKIFF.

Polar residues predominate over residues 95 to 105; that stretch reads TSKSPVSNQPS. The tract at residues 95 to 114 is disordered; sequence TSKSPVSNQPSPEEDEPIPD. The RING-type zinc finger occupies 157–195; sequence CVVCQANVRNVVFVPCNHLATCISCSANPLMPKKCPMCR.

Belongs to the IIV-6 193R family.

Functionally, plays a role early in infection by preventing host cell apoptosis. The chain is Putative apoptosis inhibitor 021L from Aedes vexans (Inland floodwater mosquito).